Here is a 379-residue protein sequence, read N- to C-terminus: F-box protein At1g30200 (379 aa).

Positions 24 to 72 (DHFDLLPDSLLLLIFDKVADVKDLGRCCIVSRRFHSLVPFVENVLVRVD) constitute an F-box domain.

In Arabidopsis thaliana (Mouse-ear cress), this protein is F-box protein At1g30200.